Consider the following 280-residue polypeptide: Large ribosomal subunit protein uL2 (280 aa).

Disordered regions lie at residues 32–54 and 221–280; these read SLLVPNKSTGGRNNNGRVTSRHM and RGMA…DSKK. A compositionally biased stretch (polar residues) spans 37 to 49; that stretch reads NKSTGGRNNNGRV. Residues 232–242 show a composition bias toward gly residues; it reads MGGGEGKSKSG. Residues 257–280 are compositionally biased toward basic residues; sequence KGLKTRKRKKASSKLIVRRRDSKK.

Belongs to the universal ribosomal protein uL2 family. Part of the 50S ribosomal subunit. Forms a bridge to the 30S subunit in the 70S ribosome.

Functionally, one of the primary rRNA binding proteins. Required for association of the 30S and 50S subunits to form the 70S ribosome, for tRNA binding and peptide bond formation. It has been suggested to have peptidyltransferase activity; this is somewhat controversial. Makes several contacts with the 16S rRNA in the 70S ribosome. This chain is Large ribosomal subunit protein uL2, found in Chloroherpeton thalassium (strain ATCC 35110 / GB-78).